The sequence spans 1520 residues: Accessory colonization factor AcfD (1520 aa).

Residues 1-16 form the signal peptide; that stretch reads MKIRIVSLIVLGFLIG. The N-palmitoyl cysteine moiety is linked to residue C17. C17 is lipidated: S-diacylglycerol cysteine. The 304-residue stretch at 1085-1388 folds into the Peptidase M60 domain; sequence GNRQPTGQWA…MFAQLKEWAE (304 aa).

The protein localises to the cell membrane. This Vibrio cholerae serotype O1 (strain ATCC 39315 / El Tor Inaba N16961) protein is Accessory colonization factor AcfD (acfD).